A 199-amino-acid chain; its full sequence is MIKVGLTGGICSGKSTISSMIKEAGIPVIDADIIAREVLEKYPDILLRVRATFGGHFFDWRGDFRRREFGNHIFRFPKERIKYEEIIMPYIKEEIEIKLKEYEKINTKLVVVDGATLIENDMHKDMDMVVLVWVDKSSQIERMGFRDKLSKGEAINRINSQLSLERKKDYANIIIDNSGNLIKTKEQIDDLLEFFTLYQ.

The DPCK domain occupies 3–199; that stretch reads KVGLTGGICS…DLLEFFTLYQ (197 aa). ATP is bound at residue 11 to 16; it reads CSGKST.

The protein belongs to the CoaE family.

The protein localises to the cytoplasm. It catalyses the reaction 3'-dephospho-CoA + ATP = ADP + CoA + H(+). Its pathway is cofactor biosynthesis; coenzyme A biosynthesis; CoA from (R)-pantothenate: step 5/5. Catalyzes the phosphorylation of the 3'-hydroxyl group of dephosphocoenzyme A to form coenzyme A. This is Dephospho-CoA kinase from Clostridium perfringens (strain 13 / Type A).